The sequence spans 81 residues: uncharacterized protein (81 aa).

Positions 1 to 24 (MRKILKIVSLLILLLLLVYSFFSP) are cleaved as a signal peptide. Topologically, residues 25-28 (NSQL) are extracellular. A helical transmembrane segment spans residues 29–49 (FVFVQLIIIAFLIGFGINCFV). Topologically, residues 50-81 (KKERYQGTLYFVIAICNITINLDKINELIQSI) are cytoplasmic.

It localises to the cell membrane. This is an uncharacterized protein from Bacillus subtilis (strain 168).